The following is a 495-amino-acid chain: Cytochrome P450 2E1 (495 aa).

298–303 (FAGTET) contributes to the substrate binding site. Residue Cys437 participates in heme binding.

It belongs to the cytochrome P450 family. In terms of assembly, interacts with chaperones HSP70 and HSP90; this interaction is required for initial targeting to mitochondria. The cofactor is heme.

Its subcellular location is the endoplasmic reticulum membrane. The protein localises to the microsome membrane. The protein resides in the mitochondrion inner membrane. It carries out the reaction an organic molecule + reduced [NADPH--hemoprotein reductase] + O2 = an alcohol + oxidized [NADPH--hemoprotein reductase] + H2O + H(+). The enzyme catalyses (5Z,8Z,11Z)-eicosatrienoate + reduced [NADPH--hemoprotein reductase] + O2 = 19-hydroxy-(5Z,8Z,11Z)-eicosatrienoate + oxidized [NADPH--hemoprotein reductase] + H2O + H(+). The catalysed reaction is (5Z,8Z,11Z,14Z,17Z)-eicosapentaenoate + reduced [NADPH--hemoprotein reductase] + O2 = 19-hydroxy-(5Z,8Z,11Z,14Z,17Z)-eicosapentaenoate + oxidized [NADPH--hemoprotein reductase] + H2O + H(+). It catalyses the reaction (4Z,7Z,10Z,13Z,16Z,19Z)-docosahexaenoate + reduced [NADPH--hemoprotein reductase] + O2 = 21-hydroxy-(4Z,7Z,10Z,13Z,16Z,19Z)-docosahexaenoate + oxidized [NADPH--hemoprotein reductase] + H2O + H(+). It carries out the reaction dodecanoate + reduced [NADPH--hemoprotein reductase] + O2 = 11-hydroxydodecanoate + oxidized [NADPH--hemoprotein reductase] + H2O + H(+). The enzyme catalyses tetradecanoate + reduced [NADPH--hemoprotein reductase] + O2 = 13-hydroxytetradecanoate + oxidized [NADPH--hemoprotein reductase] + H2O + H(+). The catalysed reaction is 4-nitrophenol + NADPH + O2 + H(+) = 4-nitrocatechol + NADP(+) + H2O. It participates in lipid metabolism; fatty acid metabolism. With respect to regulation, the omega-1 hydroxylase activity is stimulated by cytochrome b5. A cytochrome P450 monooxygenase involved in the metabolism of fatty acids. Mechanistically, uses molecular oxygen inserting one oxygen atom into a substrate, and reducing the second into a water molecule, with two electrons provided by NADPH via cytochrome P450 reductase (NADPH--hemoprotein reductase). Catalyzes the hydroxylation of carbon-hydrogen bonds. Hydroxylates fatty acids specifically at the omega-1 position displaying the highest catalytic activity for saturated fatty acids. May be involved in the oxidative metabolism of xenobiotics. The sequence is that of Cytochrome P450 2E1 (CYP2E1) from Bos taurus (Bovine).